The chain runs to 341 residues: Malate dehydrogenase 2, mitochondrial (341 aa).

A mitochondrion-targeting transit peptide spans 1–22 (MFRSMIVRSASPVKQGLLRRGF). Residues 36-42 (GAAGGIG) and D62 contribute to the NAD(+) site. Positions 109 and 115 each coordinate substrate. Residues N122 and 145–147 (ISN) each bind NAD(+). Substrate-binding residues include N147 and R181. The active-site Proton acceptor is the H205. M256 lines the NAD(+) pocket.

Belongs to the LDH/MDH superfamily. MDH type 1 family. As to quaternary structure, homodimer. In terms of tissue distribution, expressed in rosette leaves at low levels.

Its subcellular location is the mitochondrion matrix. It carries out the reaction (S)-malate + NAD(+) = oxaloacetate + NADH + H(+). In terms of biological role, catalyzes a reversible NAD-dependent dehydrogenase reaction involved in central metabolism and redox homeostasis between organelle compartments. Required for carbon dioxide and energy partitioning in leaves. May limit photorespiration during the dark phase. Can convert 2-ketoglutarate to L-2-hydroxyglutarate in vitro. The sequence is that of Malate dehydrogenase 2, mitochondrial from Arabidopsis thaliana (Mouse-ear cress).